A 172-amino-acid chain; its full sequence is Ribosome maturation factor RimM (172 aa).

Residues 93–167 (DEHEFYYHEI…RVVITPIPGM (75 aa)) enclose the PRC barrel domain.

The protein belongs to the RimM family. In terms of assembly, binds ribosomal protein uS19.

It is found in the cytoplasm. In terms of biological role, an accessory protein needed during the final step in the assembly of 30S ribosomal subunit, possibly for assembly of the head region. Essential for efficient processing of 16S rRNA. May be needed both before and after RbfA during the maturation of 16S rRNA. It has affinity for free ribosomal 30S subunits but not for 70S ribosomes. This is Ribosome maturation factor RimM from Exiguobacterium sp. (strain ATCC BAA-1283 / AT1b).